Here is a 901-residue protein sequence, read N- to C-terminus: Probable dipeptidyl-aminopeptidase B (901 aa).

Over residues 1-22 the composition is skewed to low complexity; the sequence is MSSPRPSTSSTSSDSGLSVDTT. Residues 1 to 67 are disordered; the sequence is MSSPRPSTSS…EPFLPSAKKQ (67 aa). At 1-76 the chain is on the cytoplasmic side; the sequence is MSSPRPSTSS…QAASGSRTSR (76 aa). A helical; Signal-anchor for type II membrane protein membrane pass occupies residues 77-97; that stretch reads LIWGLVILCVAGWLWGLVLFV. The Vacuolar portion of the chain corresponds to 98-901; it reads TQNRSAQQSV…VKRSLPMLVK (804 aa). 2 N-linked (GlcNAc...) asparagine glycosylation sites follow: Asn-334 and Asn-625. Residue Ser-739 is the Charge relay system of the active site. N-linked (GlcNAc...) asparagine glycosylation is present at Asn-793. Active-site charge relay system residues include Asp-816 and His-849.

The protein belongs to the peptidase S9B family.

Its subcellular location is the vacuole membrane. The catalysed reaction is Release of an N-terminal dipeptide, Xaa-Yaa-|-Zaa-, from a polypeptide, preferentially when Yaa is Pro, provided Zaa is neither Pro nor hydroxyproline.. In terms of biological role, type IV dipeptidyl-peptidase which removes N-terminal dipeptides sequentially from polypeptides having unsubstituted N-termini provided that the penultimate residue is proline. The chain is Probable dipeptidyl-aminopeptidase B (dapB) from Aspergillus niger (strain ATCC MYA-4892 / CBS 513.88 / FGSC A1513).